A 386-amino-acid polypeptide reads, in one-letter code: Lysophosphatidylserine lipase ABHD12 (386 aa).

Residues 1-66 (MRKRAEPVPP…YGLWSRLRMF (66 aa)) lie on the Cytoplasmic side of the membrane. The chain crosses the membrane as a helical span at residues 67–87 (LIFLLGLYIAIPFLVKICPAI). The Extracellular segment spans residues 88–386 (QTQLVFLNLV…RDFLGNTEQQ (299 aa)). Asparagine 114 carries an N-linked (GlcNAc...) asparagine glycan. Serine 237 functions as the Nucleophile in the catalytic mechanism. Active-site charge relay system residues include aspartate 324 and histidine 363.

It belongs to the serine esterase family.

The protein localises to the endoplasmic reticulum membrane. The catalysed reaction is 1-(9Z-octadecenoyl)-sn-glycero-3-phospho-L-serine + H2O = sn-glycero-3-phospho-L-serine + (9Z)-octadecenoate + H(+). It catalyses the reaction 1-(9Z-octadecenoyl)-sn-glycero-3-phospho-(1'-sn-glycerol) + H2O = sn-glycero-3-phospho-(1'-sn-glycerol) + (9Z)-octadecenoate + H(+). It carries out the reaction 1-(9Z-octadecenoyl)-sn-glycero-3-phospho-(1D-myo-inositol) + H2O = sn-glycero-3-phospho-1D-myo-inositol + (9Z)-octadecenoate + H(+). The enzyme catalyses 1-(9Z-octadecenoyl)-sn-glycero-3-phosphoethanolamine + H2O = sn-glycero-3-phosphoethanolamine + (9Z)-octadecenoate + H(+). The catalysed reaction is 1-(9Z-octadecenoyl)-sn-glycero-3-phosphocholine + H2O = 1-(9Z-octadecenoyl)-sn-glycerol + phosphocholine + H(+). It catalyses the reaction 2-(9Z-octadecenoyl)-glycerol + H2O = glycerol + (9Z)-octadecenoate + H(+). It carries out the reaction 1-hexadecanoyl-sn-glycero-3-phospho-L-serine + H2O = sn-glycero-3-phospho-L-serine + hexadecanoate + H(+). The enzyme catalyses 2-(5Z,8Z,11Z,14Z-eicosatetraenoyl)-glycerol + H2O = glycerol + (5Z,8Z,11Z,14Z)-eicosatetraenoate + H(+). The catalysed reaction is Hydrolyzes glycerol monoesters of long-chain fatty acids.. It catalyses the reaction 1-decanoylglycerol + H2O = decanoate + glycerol + H(+). It carries out the reaction 1-dodecanoylglycerol + H2O = dodecanoate + glycerol + H(+). The enzyme catalyses 1-tetradecanoylglycerol + H2O = tetradecanoate + glycerol + H(+). The catalysed reaction is 2-hexadecanoylglycerol + H2O = glycerol + hexadecanoate + H(+). It catalyses the reaction 1-(9Z-octadecenoyl)-glycerol + H2O = glycerol + (9Z)-octadecenoate + H(+). It carries out the reaction 2-(9Z,12Z-octadecadienoyl)-glycerol + H2O = (9Z,12Z)-octadecadienoate + glycerol + H(+). The enzyme catalyses 1-(5Z,8Z,11Z,14Z-eicosatetraenoyl)-glycerol + H2O = glycerol + (5Z,8Z,11Z,14Z)-eicosatetraenoate + H(+). The catalysed reaction is 1-(9Z,12Z-octadecadienoyl)-glycerol + H2O = (9Z,12Z)-octadecadienoate + glycerol + H(+). It catalyses the reaction 1-hexadecanoylglycerol + H2O = glycerol + hexadecanoate + H(+). It carries out the reaction 1-octadecanoylglycerol + H2O = octadecanoate + glycerol + H(+). The enzyme catalyses 1-octadecanoyl-2-(9,10-epoxyoctadecanoyl)-sn-glycero-3-phospho-L-serine + H2O = 9,10-epoxyoctadecanoate + 1-octadecanoyl-sn-glycero-3-phosphoserine + H(+). The catalysed reaction is 1-octadecanoyl-2-(10-hydroxyoctadecanoyl)-sn-glycero-3-phospho-L-serine + H2O = 1-octadecanoyl-sn-glycero-3-phosphoserine + 10-hydroxyoctadecanoate + H(+). It catalyses the reaction 1-hexadecanoyl-2-(10-hydroxyoctadecanoyl)-sn-glycero-3-phospho-L-serine + H2O = 10-hydroxyoctadecanoate + 1-hexadecanoyl-sn-glycero-3-phospho-L-serine + H(+). In terms of biological role, lysophosphatidylserine (LPS) lipase that mediates the hydrolysis of lysophosphatidylserine, a class of signaling lipids that regulates immunological and neurological processes. Represents a major lysophosphatidylserine lipase in the brain, thereby playing a key role in the central nervous system. Also able to hydrolyze oxidized phosphatidylserine; oxidized phosphatidylserine is produced in response to severe inflammatory stress and constitutes a proapoptotic 'eat me' signal. Also has monoacylglycerol (MAG) lipase activity: hydrolyzes 2-arachidonoylglycerol (2-AG), thereby acting as a regulator of endocannabinoid signaling pathways. Has a strong preference for very-long-chain lipid substrates; substrate specificity is likely due to improved catalysis and not improved substrate binding. This chain is Lysophosphatidylserine lipase ABHD12, found in Xenopus tropicalis (Western clawed frog).